Here is a 152-residue protein sequence, read N- to C-terminus: Large ribosomal subunit protein bL9 (152 aa).

It belongs to the bacterial ribosomal protein bL9 family.

In terms of biological role, binds to the 23S rRNA. This Coxiella burnetii (strain RSA 331 / Henzerling II) protein is Large ribosomal subunit protein bL9.